The chain runs to 300 residues: 7-methylguanosine phosphate-specific 5'-nucleotidase (300 aa).

Asp41 serves as the catalytic Nucleophile. Mg(2+) is bound by residues Asp41 and Asp43. Asp43 acts as the Proton donor in catalysis. Glu88 is a CMP binding site. Glu88 serves as a coordination point for N(7)-methyl-GMP. Substrate is bound by residues Ser156–Ala157 and Lys205. A Mg(2+)-binding site is contributed by Asp230. At Lys256 the chain carries N6-acetyllysine.

Belongs to the pyrimidine 5'-nucleotidase family. In terms of assembly, monomer.

It localises to the cytoplasm. It carries out the reaction N(7)-methyl-GMP + H2O = N(7)-methylguanosine + phosphate. The catalysed reaction is CMP + H2O = cytidine + phosphate. It catalyses the reaction a ribonucleoside 5'-phosphate + H2O = a ribonucleoside + phosphate. In terms of biological role, specifically hydrolyzes 7-methylguanosine monophosphate (m(7)GMP) to 7-methylguanosine and inorganic phosphate. The specific activity for m(7)GMP may protect cells against undesired salvage of m(7)GMP and its incorporation into nucleic acids. Also has weak activity for CMP. UMP and purine nucleotides are poor substrates. The sequence is that of 7-methylguanosine phosphate-specific 5'-nucleotidase (Nt5c3b) from Rattus norvegicus (Rat).